A 187-amino-acid chain; its full sequence is ATP synthase subunit b, chloroplastic (187 aa).

A helical transmembrane segment spans residues 34 to 56 (LINLAAVIGLLFYSGRSFLTNLL).

Belongs to the ATPase B chain family. F-type ATPases have 2 components, F(1) - the catalytic core - and F(0) - the membrane proton channel. F(1) has five subunits: alpha(3), beta(3), gamma(1), delta(1), epsilon(1). F(0) has four main subunits: a(1), b(1), b'(1) and c(10-14). The alpha and beta chains form an alternating ring which encloses part of the gamma chain. F(1) is attached to F(0) by a central stalk formed by the gamma and epsilon chains, while a peripheral stalk is formed by the delta, b and b' chains.

It localises to the plastid. It is found in the chloroplast thylakoid membrane. F(1)F(0) ATP synthase produces ATP from ADP in the presence of a proton or sodium gradient. F-type ATPases consist of two structural domains, F(1) containing the extramembraneous catalytic core and F(0) containing the membrane proton channel, linked together by a central stalk and a peripheral stalk. During catalysis, ATP synthesis in the catalytic domain of F(1) is coupled via a rotary mechanism of the central stalk subunits to proton translocation. Its function is as follows. Component of the F(0) channel, it forms part of the peripheral stalk, linking F(1) to F(0). The protein is ATP synthase subunit b, chloroplastic of Chlorokybus atmophyticus (Soil alga).